Reading from the N-terminus, the 141-residue chain is Hemoglobin subunit alpha (141 aa).

Residues 1-141 (VLSSADKTNI…VSTVLTSKYR (141 aa)) form the Globin domain. Residue Ser-3 is modified to Phosphoserine. Lys-7 carries the N6-succinyllysine modification. Thr-8 bears the Phosphothreonine mark. An N6-succinyllysine modification is found at Lys-11. Lys-16 carries the N6-acetyllysine; alternate modification. The residue at position 16 (Lys-16) is an N6-succinyllysine; alternate. Phosphotyrosine is present on Tyr-24. Ser-35 is subject to Phosphoserine. Lys-40 is subject to N6-succinyllysine. Residue Ser-49 is modified to Phosphoserine. Residue His-58 participates in O2 binding. A heme b-binding site is contributed by His-87. A Phosphoserine modification is found at Ser-102. Thr-108 bears the Phosphothreonine mark. Ser-124 and Ser-131 each carry phosphoserine. Phosphothreonine occurs at positions 134 and 137. Ser-138 is modified (phosphoserine).

Belongs to the globin family. In terms of assembly, heterotetramer of two alpha chains and two beta chains. Red blood cells.

Its function is as follows. Involved in oxygen transport from the lung to the various peripheral tissues. Functionally, hemopressin acts as an antagonist peptide of the cannabinoid receptor CNR1. Hemopressin-binding efficiently blocks cannabinoid receptor CNR1 and subsequent signaling. This is Hemoglobin subunit alpha (HBA) from Rousettus aegyptiacus (Egyptian fruit bat).